Reading from the N-terminus, the 543-residue chain is MFSWLKRGGARGQQPEAIRTVTSALKELYRTKLLPLEEHYRFGAFHSPALEDADFDGKPMVLVAGQYSTGKTSFIQYLLEQEVPGSRVGPEPTTDCFVAVMHGDTEGTVPGNALVVDPDKPFRKLNPFGNTFLNRFMCAQLPNQVLESISIIDTPGILSGAKQRVSRGYDFPAVLRWFAERVDLIILLFDAHKLEISDEFSEAIGALRGHEDKIRVVLNKADMVETQQLMRVYGALMWALGKVVGTPEVLRVYIGSFWSQPLLVPDNRRLFELEEQDLFRDIQGLPRHAALRKLNDLVKRARLVRVHAYIISYLKKEMPSVFGKENKKKQLILKLPVIFAKIQLEHHISPGDFPDCQKMQELLMAHDFTKFHSLKPKLLEALDEMLTHDIAKLMPLLRQEELESTEVGVQGGAFEGTHMGPFVERGPDEAMEDGEEGSDDEAEWVVTKDKSKYDEIFYNLAPADGKLSGSKAKTWMVGTKLPNSVLGRIWKLSDVDRDGMLDDEEFALASHLIEAKLEGHGLPANLPRRLVPPSKRRHKGSAE.

Serine 3 carries the phosphoserine modification. A Dynamin-type G domain is found at 55-286 (FDGKPMVLVA…DLFRDIQGLP (232 aa)). Positions 65–72 (GQYSTGKT) are G1 motif. 65-72 (GQYSTGKT) serves as a coordination point for ATP. Positions 91-92 (EP) are G2 motif. Positions 120-122 (KPF) match the KPF loop; caveolar targeting motif. The interval 153–156 (DTPG) is G3 motif. Residues 219–222 (NKAD) form a G4 motif region. Lysine 220 is an ATP binding site. Residue valine 243 is a region of interest, G5 motif. Tryptophan 258 contributes to the ATP binding site. The tract at residues 320–340 (SVFGKENKKKQLILKLPVIFA) is mediates membrane-binding. Residues serine 438, serine 468, serine 470, serine 484, and serine 493 each carry the phosphoserine modification. One can recognise an EH domain in the interval 449 to 537 (DKSKYDEIFY…RRLVPPSKRR (89 aa)). Residues 481-516 (LPNSVLGRIWKLSDVDRDGMLDDEEFALASHLIEAK) form the EF-hand domain. Residues aspartate 494, aspartate 496, aspartate 498, methionine 500, and glutamate 505 each coordinate Ca(2+). The tract at residues 523–543 (PANLPRRLVPPSKRRHKGSAE) is disordered. Residues 534-543 (SKRRHKGSAE) are compositionally biased toward basic residues.

The protein belongs to the TRAFAC class dynamin-like GTPase superfamily. Dynamin/Fzo/YdjA family. EHD subfamily. Homodimer and homooligomer. Interacts with EHD1. May also interact with EHD3 and EHD4. Interacts with MYOF. Interacts with EHBP1. Interacts with FER1L5 (via second C2 domain). Interacts with CAV1 in a cholesterol-dependent manner. Interacts (via EH domain) with PACSIN2 (via NPF motifs); this interaction probably stabilizes the caveolae. As to expression, highly expressed in heart and moderately expressed in placenta, lung, and skeletal muscle.

It localises to the cell membrane. The protein resides in the membrane. It is found in the caveola. Its subcellular location is the endosome membrane. The protein localises to the cytoplasm. It localises to the cytosol. The very low intrinsic ATPase activity is increased upon interaction with liposomes. ATP- and membrane-binding protein that controls membrane reorganization/tubulation upon ATP hydrolysis. Plays a role in membrane trafficking between the plasma membrane and endosomes. Important for the internalization of GLUT4. Required for fusion of myoblasts to skeletal muscle myotubes. Required for normal translocation of FER1L5 to the plasma membrane. Regulates the equilibrium between cell surface-associated and cell surface-dissociated caveolae by constraining caveolae at the cell membrane. This chain is EH domain-containing protein 2, found in Homo sapiens (Human).